Reading from the N-terminus, the 177-residue chain is MSIVKSKIRTIPDYPKPGILFRDITSLLLDPEGLALTIGTFVNRYQDKGITKVAGIEARGFLTGAPLAFQLGVGFIPIRKKGKLPAETVSEEYDLEYGKDVIEIHKDAVQPGDKILLMDDLIATGGTMIAAVKLLKKLGAQIYEAGVIIDLPDLGGSKKLQEKLEVPVFAICEFEGH.

Belongs to the purine/pyrimidine phosphoribosyltransferase family. In terms of assembly, homodimer.

It is found in the cytoplasm. The enzyme catalyses AMP + diphosphate = 5-phospho-alpha-D-ribose 1-diphosphate + adenine. The protein operates within purine metabolism; AMP biosynthesis via salvage pathway; AMP from adenine: step 1/1. Functionally, catalyzes a salvage reaction resulting in the formation of AMP, that is energically less costly than de novo synthesis. This chain is Adenine phosphoribosyltransferase, found in Leptospira borgpetersenii serovar Hardjo-bovis (strain JB197).